Here is a 151-residue protein sequence, read N- to C-terminus: MTSKPSGSVSWFQVFQRGQHYMKTWPSDKRLAPVFPENRVASATRFAVRFMPPLAVFTLTWQIALGGQLGPAIATALFACSMPMQGLWWLGRRSVTPLPPTLLQWFHEVRNKLAEAGQAVAPVEGTPTYQALADLLKRAFKQLDKTFLDDL.

The next 2 membrane-spanning stretches (helical) occupy residues 46–64 and 70–90; these read FAVR…WQIA and GPAI…LWWL.

Belongs to the UPF0208 family.

It localises to the cell inner membrane. In Serratia proteamaculans (strain 568), this protein is UPF0208 membrane protein Spro_3315.